The following is a 102-amino-acid chain: Large ribosomal subunit protein bL21 (102 aa).

This sequence belongs to the bacterial ribosomal protein bL21 family. As to quaternary structure, part of the 50S ribosomal subunit. Contacts protein L20.

Its function is as follows. This protein binds to 23S rRNA in the presence of protein L20. The sequence is that of Large ribosomal subunit protein bL21 from Nitratiruptor sp. (strain SB155-2).